Consider the following 449-residue polypeptide: Trigger factor (449 aa).

Positions Thr160 to Gln231 constitute a PPIase FKBP-type domain. The segment at Gly411 to Glu449 is disordered. The segment covering Ala415–Ala443 has biased composition (low complexity).

It belongs to the FKBP-type PPIase family. Tig subfamily.

The protein localises to the cytoplasm. It carries out the reaction [protein]-peptidylproline (omega=180) = [protein]-peptidylproline (omega=0). In terms of biological role, involved in protein export. Acts as a chaperone by maintaining the newly synthesized protein in an open conformation. Functions as a peptidyl-prolyl cis-trans isomerase. The polypeptide is Trigger factor (Deinococcus geothermalis (strain DSM 11300 / CIP 105573 / AG-3a)).